The primary structure comprises 162 residues: NADH-quinone oxidoreductase subunit I (162 aa).

4Fe-4S ferredoxin-type domains are found at residues 52 to 82 and 93 to 122; these read LRRY…IEAG and VRYD…EGPN. The [4Fe-4S] cluster site is built by C62, C65, C68, C72, C102, C105, C108, and C112.

Belongs to the complex I 23 kDa subunit family. In terms of assembly, NDH-1 is composed of 14 different subunits. Subunits NuoA, H, J, K, L, M, N constitute the membrane sector of the complex. Requires [4Fe-4S] cluster as cofactor.

It is found in the cell inner membrane. It carries out the reaction a quinone + NADH + 5 H(+)(in) = a quinol + NAD(+) + 4 H(+)(out). NDH-1 shuttles electrons from NADH, via FMN and iron-sulfur (Fe-S) centers, to quinones in the respiratory chain. The immediate electron acceptor for the enzyme in this species is believed to be ubiquinone. Couples the redox reaction to proton translocation (for every two electrons transferred, four hydrogen ions are translocated across the cytoplasmic membrane), and thus conserves the redox energy in a proton gradient. The protein is NADH-quinone oxidoreductase subunit I of Bradyrhizobium sp. (strain BTAi1 / ATCC BAA-1182).